A 257-amino-acid chain; its full sequence is Imidazole glycerol phosphate synthase subunit HisF (257 aa).

Residues Asp12 and Asp131 contribute to the active site.

This sequence belongs to the HisA/HisF family. In terms of assembly, heterodimer of HisH and HisF.

It is found in the cytoplasm. It carries out the reaction 5-[(5-phospho-1-deoxy-D-ribulos-1-ylimino)methylamino]-1-(5-phospho-beta-D-ribosyl)imidazole-4-carboxamide + L-glutamine = D-erythro-1-(imidazol-4-yl)glycerol 3-phosphate + 5-amino-1-(5-phospho-beta-D-ribosyl)imidazole-4-carboxamide + L-glutamate + H(+). Its pathway is amino-acid biosynthesis; L-histidine biosynthesis; L-histidine from 5-phospho-alpha-D-ribose 1-diphosphate: step 5/9. In terms of biological role, IGPS catalyzes the conversion of PRFAR and glutamine to IGP, AICAR and glutamate. The HisF subunit catalyzes the cyclization activity that produces IGP and AICAR from PRFAR using the ammonia provided by the HisH subunit. The protein is Imidazole glycerol phosphate synthase subunit HisF of Teredinibacter turnerae (strain ATCC 39867 / T7901).